Consider the following 89-residue polypeptide: Small ribosomal subunit protein bS20 (89 aa).

The protein belongs to the bacterial ribosomal protein bS20 family.

In terms of biological role, binds directly to 16S ribosomal RNA. This is Small ribosomal subunit protein bS20 from Helicobacter pylori (strain P12).